The sequence spans 346 residues: Putative aquaporin-7B (346 aa).

The Cytoplasmic segment spans residues 1-40 (MVQASGHRRSTRGSKMVSWSVIAKIQEIWCEEDERKMVRE). A helical transmembrane segment spans residues 41–58 (FLAEFMSTYVMMVFGLGS). At 59–71 (VAHMVLNKTYGSY) the chain is on the extracellular side. A helical membrane pass occupies residues 72–89 (LGVNLGFGFGVTMGVHVA). Residues 90–93 (GRIS) are Cytoplasmic-facing. Positions 94 to 107 (GAHMNAAVTFTNCA) form an intramembrane region, discontinuously helical. Residues 98–100 (NAA) carry the NPA 1 motif. The Cytoplasmic portion of the chain corresponds to 108-115 (LGRVPWRK). The chain crosses the membrane as a helical span at residues 116–136 (FPVHVLGQFLGSFLAAATIYS). Residues 137–174 (LFYTAILHFSGGELMVTGPFATAGIFATYLPDHMTLWR) lie on the Extracellular side of the membrane. A helical membrane pass occupies residues 175-192 (GFLNEEWLTRMLQLCLFT). The Cytoplasmic portion of the chain corresponds to 193-204 (ITDQENNPALPG). A helical transmembrane segment spans residues 205–221 (THALVISILVVIIRVSH). The Extracellular portion of the chain corresponds to 222 to 225 (GINT). Residues 226–239 (GYAINPSRDPPPSI) constitute an intramembrane region (discontinuously helical). The NPA 2 motif lies at 230 to 232 (NPS). At 240–257 (FTFIAGWGKQVFSDGENW) the chain is on the extracellular side. The helical transmembrane segment at 258–279 (WWVPVVAPLLGASLGGIIYLVF) threads the bilayer. Topologically, residues 280–346 (IGSTIPREPL…LHESMALEHF (67 aa)) are cytoplasmic.

This sequence belongs to the MIP/aquaporin (TC 1.A.8) family. In terms of assembly, homotetramer; each monomer provides an independent glycerol/water pore.

Its subcellular location is the membrane. The catalysed reaction is glycerol(in) = glycerol(out). It catalyses the reaction H2O(in) = H2O(out). Aquaglyceroporins form homotetrameric transmembrane channels, with each monomer independently mediating glycerol and water transport across the plasma membrane along their osmotic gradient. This chain is Putative aquaporin-7B, found in Homo sapiens (Human).